The following is a 118-amino-acid chain: MTDLIPLEQAHCLPRKGSDHKLGEARLAELLPQVPGWELAEAGMALTRTFRFPDYCRTLAFVNALAWIAHREDHHPDLGVHYDRVVVRYSTHDVGGLSENDFICAAKTARLYDQGITG.

The protein belongs to the pterin-4-alpha-carbinolamine dehydratase family.

The enzyme catalyses (4aS,6R)-4a-hydroxy-L-erythro-5,6,7,8-tetrahydrobiopterin = (6R)-L-erythro-6,7-dihydrobiopterin + H2O. This is Putative pterin-4-alpha-carbinolamine dehydratase from Xanthomonas oryzae pv. oryzae (strain PXO99A).